We begin with the raw amino-acid sequence, 191 residues long: MSSQHFQGRFEVEFKYRLSDVDAFTCALAALNPEVMLEDNQEQDSYFDTPEHSLAAEGKSLVIRTMQPSGIQLWIVKGPEADRCEAVNITDADKAASMLRTLGYRQVLAISKRRSIYFVGPFHVTRDHLEGIGDFAELAIMTDDEALLPDYRQQLQDLATRLGLSSAQLETRSYRTLCEQSLTLNSEKVPS.

The CYTH domain maps to 9-180 (RFEVEFKYRL…TRSYRTLCEQ (172 aa)). Catalysis depends on Y46, which acts as the Proton acceptor.

It belongs to the adenylyl cyclase CyaB family.

Its subcellular location is the cytoplasm. It catalyses the reaction ATP = 3',5'-cyclic AMP + diphosphate. With respect to regulation, inhibited by GTP. In terms of biological role, in vitro, CyaB catalyzes the biosynthesis of cyclic AMP (cAMP) from ATP. It seems that under the physiological conditions CyaB has no function in cAMP processes. In vitro, it is also able to hydrolyze substrates such as thiamine triphosphate (ThTP) and inorganic triphosphate (PPPi) at a low rate. It has a slight preference for ThTP over ATP and PPPi in the presence of manganese ions. This PPPase activity is probably not of physiological importance. This Aeromonas hydrophila protein is Adenylate cyclase CyaB (cyaB).